We begin with the raw amino-acid sequence, 283 residues long: Pantothenate synthetase (283 aa).

Residue Met-30–His-37 participates in ATP binding. The Proton donor role is filled by His-37. Gln-61 is a (R)-pantoate binding site. Residue Gln-61 coordinates beta-alanine. Gly-147–Asp-150 provides a ligand contact to ATP. Position 153 (Gln-153) interacts with (R)-pantoate. ATP contacts are provided by residues Ile-176 and Met-184–Arg-187.

This sequence belongs to the pantothenate synthetase family. In terms of assembly, homodimer.

It localises to the cytoplasm. It carries out the reaction (R)-pantoate + beta-alanine + ATP = (R)-pantothenate + AMP + diphosphate + H(+). It participates in cofactor biosynthesis; (R)-pantothenate biosynthesis; (R)-pantothenate from (R)-pantoate and beta-alanine: step 1/1. Functionally, catalyzes the condensation of pantoate with beta-alanine in an ATP-dependent reaction via a pantoyl-adenylate intermediate. This Geobacter sulfurreducens (strain ATCC 51573 / DSM 12127 / PCA) protein is Pantothenate synthetase.